Reading from the N-terminus, the 294-residue chain is Cytidine deaminase (294 aa).

2 CMP/dCMP-type deaminase domains span residues 49-169 (TPQQ…FGPA) and 188-294 (ETQD…YIAL). Position 90 to 92 (90 to 92 (NLE)) interacts with substrate. Position 103 (His103) interacts with Zn(2+). The active-site Proton donor is Glu105. Zn(2+) contacts are provided by Cys130 and Cys133.

The protein belongs to the cytidine and deoxycytidylate deaminase family. In terms of assembly, homodimer. Zn(2+) is required as a cofactor.

The catalysed reaction is cytidine + H2O + H(+) = uridine + NH4(+). It carries out the reaction 2'-deoxycytidine + H2O + H(+) = 2'-deoxyuridine + NH4(+). Its function is as follows. This enzyme scavenges exogenous and endogenous cytidine and 2'-deoxycytidine for UMP synthesis. The protein is Cytidine deaminase of Pasteurella multocida (strain Pm70).